The sequence spans 1201 residues: MARAKLKNSPSESNSHVKTVPPATTEDVRGVSPLLPARRMGSLGSDVGQRPHAEDFSMDSSFSQVQVEFYVNENTFKERLKLFFIKNQRSSLRIRLFNFSLKLLTCLLYIVRVLLDNPEEGIGCWECEKQNYTLFNQSTKINWSHIFWVDRKLPLWAVQVSIALISFLETMLLIYLSYKGNIWEQIFRISFILEMINTVPFIITIFWPPLRNLFIPVFLNCWLAKYALENMINDLHRAIQRTQSAMFNQVLILICTLLCLVFTGTCGIQHLERAGEKLSLFKSFYFCIVTFSTVGYGDVTPKIWPSQLLVVIMICVALVVLPLQFEELVYLWMERQKSGGNYSRHRAQTEKHVVLCVSSLKIDLLMDFLNEFYAHPRLQDYYVVILCPTEMDIQVRRVLQIPLWSQRVIYLQGSALKDQDLMRAKMDNGEACFILSSRNEVDRTAADHQTILRAWAVKDFAPNCPLYVQILKPENKFHVKFADHVVCEEECKYAMLALNCVCPATSTLITLLVHTSRGQEGQESPEQWQRMYGRCSGNEVYHIRMGDSKFFMEYEGKSFTYAAFHAHKKYGVCLIGIRREENKSILLNPGPRHIMAASDTCFYINITKEENSAFIFKQAEKQKKKGFAGRGTYDGPSRLPVHSIIASMGTVAMDLQNTECRPTNSSKLALPAENGSGNRRPSIAPVLELADTSSLLPCDLLSDQSEDEMTQSDEEGSAVVEYVKGYPPNSPYIGSSPTLCHLLPEKAPFCCLRLDKGCKHNSFEDAKAYGFKNKLIIVSAETAGNGLYNFIVPLRAYYRSRKELNPIVLLLDNKPEHHFLEAICCFPMVYYMEGTIDNLDSLLQCGIIYADNLVVVDKESTMSAEEDYMADAKTIVNVQTMFRLFPSLSIITELTHPSNMRFMQFRAKDSYSLALSKLEKKERENGSNLAFMFRLPFAAGRVFSISMLDTLLYQSFVKDYMITITRLLLGLDTTPGSGYLCAMKITEDDLWIRTYGRLFQKLCSSSAEIPIGIYRTESHMFATSEPHDIRAQSQISINVEDCEDTKDVKEHWGIKTGHHRNSCSSDQSEHPLLRRKSMQWARRLSRKGNKHSGKTAEWISQQRLSLYRRSERQELSELVKNRMKHLGLPTTGYDEMNDHQNTLSYVLINPPPDTRLELNDIVYLIRSDPLAHVANDGHSRKSSCSNKLGPCNPETRDETQL.

The disordered stretch occupies residues 1 to 28; sequence MARAKLKNSPSESNSHVKTVPPATTEDV. The Cytoplasmic portion of the chain corresponds to 1-92; that stretch reads MARAKLKNSP…FFIKNQRSSL (92 aa). Residues 8 to 17 are compositionally biased toward polar residues; that stretch reads NSPSESNSHV. Residues 93–115 traverse the membrane as a helical segment; sequence RIRLFNFSLKLLTCLLYIVRVLL. Topologically, residues 116 to 152 are extracellular; that stretch reads DNPEEGIGCWECEKQNYTLFNQSTKINWSHIFWVDRK. Residues N131 and N136 are each glycosylated (N-linked (GlcNAc...) asparagine). Residues 153-175 traverse the membrane as a helical segment; it reads LPLWAVQVSIALISFLETMLLIY. Over 176-184 the chain is Cytoplasmic; it reads LSYKGNIWE. Residues 185–206 traverse the membrane as a helical segment; it reads QIFRISFILEMINTVPFIITIF. Residues 207-216 are Extracellular-facing; that stretch reads WPPLRNLFIP. Residues 217–229 traverse the membrane as a helical segment; the sequence is VFLNCWLAKYALE. Topologically, residues 230-249 are cytoplasmic; it reads NMINDLHRAIQRTQSAMFNQ. Residues 250–272 traverse the membrane as a helical segment; it reads VLILICTLLCLVFTGTCGIQHLE. The Extracellular segment spans residues 273–279; that stretch reads RAGEKLS. The pore-forming intramembrane region spans 280-300; the sequence is LFKSFYFCIVTFSTVGYGDVT. Residues V294 and G295 each coordinate K(+). Residues 301–304 lie on the Extracellular side of the membrane; it reads PKIW. Residues 305–326 form a helical membrane-spanning segment; sequence PSQLLVVIMICVALVVLPLQFE. Over 327 to 1201 the chain is Cytoplasmic; that stretch reads ELVYLWMERQ…NPETRDETQL (875 aa). An RCK N-terminal 1 domain is found at 350–486; sequence EKHVVLCVSS…FHVKFADHVV (137 aa). Na(+) contacts are provided by L511, H514, S536, and N538. Zn(2+)-binding residues include C750 and C751. K(+)-binding residues include R753 and K756. Na(+)-binding residues include R753 and K756. Residues C758 and H760 each coordinate Zn(2+). K(+) contacts are provided by N761, Y769, and G770. Position 771 (F771) interacts with Na(+). The region spanning 773-913 is the RCK N-terminal 2 domain; it reads NKLIIVSAET…QFRAKDSYSL (141 aa). Residues S779, L810, D812, G834, and D857 each contribute to the K(+) site. The disordered stretch occupies residues 1175 to 1201; that stretch reads NDGHSRKSSCSNKLGPCNPETRDETQL.

The protein belongs to the potassium channel family. Calcium-activated (TC 1.A.1.3) subfamily. KCa4.1/KCNT1 sub-subfamily. Homotetramer; which constitutes the Na(+)-activated K(+) channel. Interacts with KCNT2; these heterodimer channels differ from the homomers in their unitary conductance, kinetic behavior, subcellular localization, and response to activation of protein kinase C. Phosphorylated by protein kinase C. Phosphorylation of the C-terminal domain increases channel activity.

Its subcellular location is the cell membrane. The enzyme catalyses K(+)(in) = K(+)(out). Activated by high intracellular Na(+). In addition to activation by Na(+), is cooperatively activated by intracellular Cl(-) levels. Inhibited by Zn(2+). Activated upon stimulation of G-protein coupled receptors, such as CHRM1 and GRIA1. In terms of biological role, sodium-activated K(+) channel. Acts as an important mediator of neuronal membrane excitability. Contributes to the delayed outward currents. Regulates of neuronal bursting in sensory neurons. Contributes to synaptic development and plasticity. This Gallus gallus (Chicken) protein is Potassium channel subfamily T member 1 (KCNT1).